A 105-amino-acid chain; its full sequence is T cell receptor alpha variable 40 (105 aa).

An N-terminal signal peptide occupies residues 1-19 (MNSSLDFLILILMFGGTSS). The Ig-like domain occupies 20 to 105 (NSVKQTGQIT…DSAVYYCLLG (86 aa)). Residue Asn39 is glycosylated (N-linked (GlcNAc...) asparagine). Cys40 and Cys102 form a disulfide bridge.

As to quaternary structure, alpha-beta TR is a heterodimer composed of an alpha and beta chain; disulfide-linked. The alpha-beta TR is associated with the transmembrane signaling CD3 coreceptor proteins to form the TR-CD3 (TcR or TCR). The assembly of alpha-beta TR heterodimers with CD3 occurs in the endoplasmic reticulum where a single alpha-beta TR heterodimer associates with one CD3D-CD3E heterodimer, one CD3G-CD3E heterodimer and one CD247 homodimer forming a stable octameric structure. CD3D-CD3E and CD3G-CD3E heterodimers preferentially associate with TR alpha and TR beta chains, respectively. The association of the CD247 homodimer is the last step of TcR assembly in the endoplasmic reticulum and is required for transport to the cell surface.

It localises to the cell membrane. Its function is as follows. V region of the variable domain of T cell receptor (TR) alpha chain that participates in the antigen recognition. Alpha-beta T cell receptors are antigen specific receptors which are essential to the immune response and are present on the cell surface of T lymphocytes. Recognize peptide-major histocompatibility (MH) (pMH) complexes that are displayed by antigen presenting cells (APC), a prerequisite for efficient T cell adaptive immunity against pathogens. Binding of alpha-beta TR to pMH complex initiates TR-CD3 clustering on the cell surface and intracellular activation of LCK that phosphorylates the ITAM motifs of CD3G, CD3D, CD3E and CD247 enabling the recruitment of ZAP70. In turn ZAP70 phosphorylates LAT, which recruits numerous signaling molecules to form the LAT signalosome. The LAT signalosome propagates signal branching to three major signaling pathways, the calcium, the mitogen-activated protein kinase (MAPK) kinase and the nuclear factor NF-kappa-B (NF-kB) pathways, leading to the mobilization of transcription factors that are critical for gene expression and essential for T cell growth and differentiation. The T cell repertoire is generated in the thymus, by V-(D)-J rearrangement. This repertoire is then shaped by intrathymic selection events to generate a peripheral T cell pool of self-MH restricted, non-autoaggressive T cells. Post-thymic interaction of alpha-beta TR with the pMH complexes shapes TR structural and functional avidity. The sequence is that of T cell receptor alpha variable 40 from Homo sapiens (Human).